The chain runs to 181 residues: Ribonuclease M5 (181 aa).

Positions 3-86 constitute a Toprim domain; sequence KEVIVVEGRD…AYISQEEGTK (84 aa). Glu9, Asp55, and Asp57 together coordinate Mg(2+).

The protein belongs to the ribonuclease M5 family. Requires Mg(2+) as cofactor.

It is found in the cytoplasm. The catalysed reaction is Endonucleolytic cleavage of RNA, removing 21 and 42 nucleotides, respectively, from the 5'- and 3'-termini of a 5S-rRNA precursor.. Required for correct processing of both the 5' and 3' ends of 5S rRNA precursor. Cleaves both sides of a double-stranded region yielding mature 5S rRNA in one step. The sequence is that of Ribonuclease M5 from Clostridium botulinum (strain Hall / ATCC 3502 / NCTC 13319 / Type A).